Reading from the N-terminus, the 482-residue chain is tRNA sulfurtransferase (482 aa).

The 105-residue stretch at Asp61 to Arg165 folds into the THUMP domain. Residues Leu183–Ile184, Lys265, Gly287, and Gln296 each bind ATP. A disulfide bridge connects residues Cys344 and Cys456. The region spanning Leu404–Pro482 is the Rhodanese domain. The Cysteine persulfide intermediate role is filled by Cys456.

Belongs to the ThiI family.

The protein localises to the cytoplasm. The catalysed reaction is [ThiI sulfur-carrier protein]-S-sulfanyl-L-cysteine + a uridine in tRNA + 2 reduced [2Fe-2S]-[ferredoxin] + ATP + H(+) = [ThiI sulfur-carrier protein]-L-cysteine + a 4-thiouridine in tRNA + 2 oxidized [2Fe-2S]-[ferredoxin] + AMP + diphosphate. It carries out the reaction [ThiS sulfur-carrier protein]-C-terminal Gly-Gly-AMP + S-sulfanyl-L-cysteinyl-[cysteine desulfurase] + AH2 = [ThiS sulfur-carrier protein]-C-terminal-Gly-aminoethanethioate + L-cysteinyl-[cysteine desulfurase] + A + AMP + 2 H(+). It participates in cofactor biosynthesis; thiamine diphosphate biosynthesis. Catalyzes the ATP-dependent transfer of a sulfur to tRNA to produce 4-thiouridine in position 8 of tRNAs, which functions as a near-UV photosensor. Also catalyzes the transfer of sulfur to the sulfur carrier protein ThiS, forming ThiS-thiocarboxylate. This is a step in the synthesis of thiazole, in the thiamine biosynthesis pathway. The sulfur is donated as persulfide by IscS. The polypeptide is tRNA sulfurtransferase (Aliivibrio fischeri (strain ATCC 700601 / ES114) (Vibrio fischeri)).